The primary structure comprises 262 residues: Small ribosomal subunit protein eS1 (262 aa).

It belongs to the eukaryotic ribosomal protein eS1 family. As to quaternary structure, component of the small ribosomal subunit. Mature ribosomes consist of a small (40S) and a large (60S) subunit. The 40S subunit contains about 33 different proteins and 1 molecule of RNA (18S). The 60S subunit contains about 49 different proteins and 3 molecules of RNA (25S, 5.8S and 5S).

Its subcellular location is the cytoplasm. This chain is Small ribosomal subunit protein eS1, found in Cryptosporidium hominis.